Here is a 473-residue protein sequence, read N- to C-terminus: RUN domain-containing protein 3B (473 aa).

The disordered stretch occupies residues 1 to 24 (MASRSLGGLSGIRGGGGGGGKKSL). Gly residues predominate over residues 8-21 (GLSGIRGGGGGGGK). Position 13 is an omega-N-methylarginine (arginine 13). Positions 57–206 (DDSSPEFNNF…IDFSFCLKGE (150 aa)) constitute an RUN domain. 2 positions are modified to phosphoserine: serine 232 and serine 233. Residues 317-342 (AHKLEKEQLEYIIVELQDQLTVLKNN) adopt a coiled-coil conformation. Residues 399-422 (SLSQTSLDPGQSQEGDGKQDTLNV) are compositionally biased toward polar residues. The disordered stretch occupies residues 399–428 (SLSQTSLDPGQSQEGDGKQDTLNVMSEGKE).

The protein belongs to the RUNDC3 family. Interacts with RAP2A. Isoform 2 is expressed at high levels in brain, thymus, ovary, testis, leukocyte, liver, small intestine and prostate. Isoform 1 is expressed in the brain, testis and adrenal gland. It is activated in tumorigenic breast cancer cell lines and in the primary tumor of breast cancer patients. Activation also correlates with metastatic lymph node invasion and can be detected in metastatic epithelial cells from the lymph nodes and in the bone marrow of patients.

The sequence is that of RUN domain-containing protein 3B (RUNDC3B) from Homo sapiens (Human).